The following is a 406-amino-acid chain: UPF0754 membrane protein Cyan7425_4067 (406 aa).

The helical transmembrane segment at isoleucine 381–leucine 401 threads the bilayer.

This sequence belongs to the UPF0754 family.

Its subcellular location is the cell inner membrane. The protein is UPF0754 membrane protein Cyan7425_4067 of Cyanothece sp. (strain PCC 7425 / ATCC 29141).